Consider the following 311-residue polypeptide: Histidine decarboxylase proenzyme (311 aa).

Substrate contacts are provided by Asp64 and Ser82. Ser83 is modified (pyruvic acid (Ser)). The Proton donor role is filled by Glu198.

The proenzyme is a hexamer of identical pi chains; each pi chain monomer is cleaved to form a small (or beta) chain and a large (or alpha) chain by non-hydrolytic self-catalysis. It depends on pyruvate as a cofactor.

It catalyses the reaction L-histidine + H(+) = histamine + CO2. This is Histidine decarboxylase proenzyme (hdcA) from Lactobacillus sp. (strain 30a).